The following is a 176-amino-acid chain: CDP-archaeol synthase (176 aa).

The next 5 membrane-spanning stretches (helical) occupy residues 12-32 (FIYW…SPVL), 60-80 (GFYV…IILC), 85-105 (ILIG…GSFI), 118-138 (PIID…FLGI), and 141-161 (FISY…LHII).

Belongs to the CDP-archaeol synthase family. The cofactor is Mg(2+).

It localises to the cell membrane. It carries out the reaction 2,3-bis-O-(geranylgeranyl)-sn-glycerol 1-phosphate + CTP + H(+) = CDP-2,3-bis-O-(geranylgeranyl)-sn-glycerol + diphosphate. The protein operates within membrane lipid metabolism; glycerophospholipid metabolism. Catalyzes the formation of CDP-2,3-bis-(O-geranylgeranyl)-sn-glycerol (CDP-archaeol) from 2,3-bis-(O-geranylgeranyl)-sn-glycerol 1-phosphate (DGGGP) and CTP. This reaction is the third ether-bond-formation step in the biosynthesis of archaeal membrane lipids. In Staphylothermus marinus (strain ATCC 43588 / DSM 3639 / JCM 9404 / F1), this protein is CDP-archaeol synthase.